A 428-amino-acid chain; its full sequence is Chaperone SurA (428 aa).

The N-terminal stretch at 1 to 20 (MKNWKTLLLGIAMIANTSFA) is a signal peptide. PpiC domains follow at residues 171–272 (STEL…KVND) and 282–382 (VTEV…ELLD).

It localises to the periplasm. It carries out the reaction [protein]-peptidylproline (omega=180) = [protein]-peptidylproline (omega=0). In terms of biological role, chaperone involved in the correct folding and assembly of outer membrane proteins. Recognizes specific patterns of aromatic residues and the orientation of their side chains, which are found more frequently in integral outer membrane proteins. May act in both early periplasmic and late outer membrane-associated steps of protein maturation. In Shigella dysenteriae serotype 1 (strain Sd197), this protein is Chaperone SurA.